The sequence spans 109 residues: MTERKHDDTGVEEGTGLATKTRPATKKPSLYRVLLLNDDYTPMEFVVEVLARIFRKSPEDAARIMLHVHQNGVGMCGVYTYEVAETKVAQVMDAARRAQHPLQCTMEKE.

The interval 1–23 (MTERKHDDTGVEEGTGLATKTRP) is disordered.

The protein belongs to the ClpS family. Binds to the N-terminal domain of the chaperone ClpA.

Involved in the modulation of the specificity of the ClpAP-mediated ATP-dependent protein degradation. This is ATP-dependent Clp protease adapter protein ClpS from Maricaulis maris (strain MCS10) (Caulobacter maris).